Reading from the N-terminus, the 90-residue chain is Small ribosomal subunit protein bS18 (90 aa).

It belongs to the bacterial ribosomal protein bS18 family. As to quaternary structure, part of the 30S ribosomal subunit. Forms a tight heterodimer with protein bS6.

Its function is as follows. Binds as a heterodimer with protein bS6 to the central domain of the 16S rRNA, where it helps stabilize the platform of the 30S subunit. The sequence is that of Small ribosomal subunit protein bS18 from Porphyromonas gingivalis (strain ATCC 33277 / DSM 20709 / CIP 103683 / JCM 12257 / NCTC 11834 / 2561).